Reading from the N-terminus, the 320-residue chain is Acyl-coenzyme A thioesterase 8 (320 aa).

Active-site charge relay system residues include Asp-233, Ser-255, and Gln-305. The short motif at 318–320 is the Microbody targeting signal element; it reads SKL.

This sequence belongs to the C/M/P thioester hydrolase family. Homodimer. In terms of tissue distribution, ubiquitous.

The protein resides in the peroxisome matrix. The enzyme catalyses choloyl-CoA + H2O = cholate + CoA + H(+). It carries out the reaction chenodeoxycholoyl-CoA + H2O = chenodeoxycholate + CoA + H(+). It catalyses the reaction acetyl-CoA + H2O = acetate + CoA + H(+). The catalysed reaction is malonyl-CoA + H2O = malonate + CoA + H(+). The enzyme catalyses acetoacetyl-CoA + H2O = acetoacetate + CoA + H(+). It carries out the reaction propanoyl-CoA + H2O = propanoate + CoA + H(+). It catalyses the reaction butanoyl-CoA + H2O = butanoate + CoA + H(+). The catalysed reaction is succinyl-CoA + H2O = succinate + CoA + H(+). The enzyme catalyses glutaryl-CoA + H2O = glutarate + CoA + H(+). It carries out the reaction hexanoyl-CoA + H2O = hexanoate + CoA + H(+). It catalyses the reaction hexanedioyl-CoA + H2O = hexanedioate + CoA + H(+). The catalysed reaction is octanoyl-CoA + H2O = octanoate + CoA + H(+). The enzyme catalyses octanedioyl-CoA + H2O = octanedioate + CoA + H(+). It carries out the reaction decanoyl-CoA + H2O = decanoate + CoA + H(+). It catalyses the reaction decanedioyl-CoA + H2O = decanedioate + CoA + H(+). The catalysed reaction is dodecanoyl-CoA + H2O = dodecanoate + CoA + H(+). The enzyme catalyses dodecanedioyl-CoA + H2O = dodecanedioate + CoA + H(+). It carries out the reaction tetradecanoyl-CoA + H2O = tetradecanoate + CoA + H(+). It catalyses the reaction (9Z)-tetradecenoyl-CoA + H2O = (9Z)-tetradecenoate + CoA + H(+). The catalysed reaction is hexadecanoyl-CoA + H2O = hexadecanoate + CoA + H(+). The enzyme catalyses (9Z)-hexadecenoyl-CoA + H2O = (9Z)-hexadecenoate + CoA + H(+). It carries out the reaction octadecanoyl-CoA + H2O = octadecanoate + CoA + H(+). It catalyses the reaction (9Z)-octadecenoyl-CoA + H2O = (9Z)-octadecenoate + CoA + H(+). The catalysed reaction is (9Z,12Z)-octadecadienoyl-CoA + H2O = (9Z,12Z)-octadecadienoate + CoA + H(+). The enzyme catalyses eicosanoyl-CoA + H2O = eicosanoate + CoA + H(+). It carries out the reaction (5Z,8Z,11Z,14Z)-eicosatetraenoyl-CoA + H2O = (5Z,8Z,11Z,14Z)-eicosatetraenoate + CoA + H(+). It catalyses the reaction 4,8-dimethylnonanoyl-CoA + H2O = 4,8-dimethylnonanoate + CoA + H(+). The catalysed reaction is 2,6-dimethylheptanoyl-CoA + H2O = 2,6-dimethylheptanoate + CoA + H(+). The enzyme catalyses (3S)-3-hydroxy-3-methylglutaryl-CoA + H2O = 3-hydroxy-3-methylglutarate + CoA + H(+). It carries out the reaction 3alpha,7alpha,12alpha-trihydroxy-5beta-cholestan-26-oyl-CoA + H2O = 3alpha,7alpha,12alpha-trihydroxy-5beta-cholestan-26-oate + CoA + H(+). It catalyses the reaction 2-methyloctadecanoyl-CoA + H2O = 2-methyloctadecanoate + CoA + H(+). The catalysed reaction is prostaglandin F2alpha-CoA + H2O = prostaglandin F2alpha + CoA + H(+). Its pathway is lipid metabolism; fatty acid metabolism. With respect to regulation, inhibited by CoASH (IC(50)=10-15 uM). Also inhibited by cysteine-reactive agents. Catalyzes the hydrolysis of acyl-CoAs into free fatty acids and coenzyme A (CoASH), regulating their respective intracellular levels. Displays no strong substrate specificity with respect to the carboxylic acid moiety of Acyl-CoAs. Hydrolyzes medium length (C2 to C20) straight-chain, saturated and unsaturated acyl-CoAS but is inactive towards substrates with longer aliphatic chains. Moreover, it catalyzes the hydrolysis of CoA esters of bile acids, such as choloyl-CoA and chenodeoxycholoyl-CoA and competes with bile acid CoA:amino acid N-acyltransferase (BAAT). Is also able to hydrolyze CoA esters of dicarboxylic acids. It is involved in the metabolic regulation of peroxisome proliferation. In Mus musculus (Mouse), this protein is Acyl-coenzyme A thioesterase 8 (Acot8).